We begin with the raw amino-acid sequence, 695 residues long: Protein-glutamine gamma-glutamyltransferase 2 (695 aa).

Residues Cys-272, His-332, and Asp-355 contribute to the active site. Positions 395, 397, 434, 444, and 449 each coordinate Ca(2+). Residues 476 to 482 and 578 to 581 each bind GTP; these read SIKHAQP and ANIP.

Belongs to the transglutaminase superfamily. Transglutaminase family. Monomer. Ca(2+) serves as cofactor.

The protein localises to the cytoplasm. It localises to the cytosol. Its subcellular location is the nucleus. It is found in the chromosome. The protein resides in the secreted. The protein localises to the extracellular space. It localises to the extracellular matrix. Its subcellular location is the cell membrane. It is found in the mitochondrion. It carries out the reaction L-glutaminyl-[protein] + L-lysyl-[protein] = [protein]-L-lysyl-N(6)-5-L-glutamyl-[protein] + NH4(+). It catalyses the reaction L-glutaminyl-[protein] + serotonin = 5-serotonyl-L-glutamyl-[protein] + NH4(+). The enzyme catalyses L-glutaminyl-[protein] + dopamine = 5-dopaminyl-L-glutamyl-[protein] + NH4(+). The catalysed reaction is L-glutaminyl-[protein] + histamine = 5-histaminyl-L-glutamyl-[protein] + NH4(+). It carries out the reaction L-glutaminyl-[protein] + (R)-noradrenaline = 5-(R)-noradrenalinyl-L-glutamyl-[protein] + NH4(+). It catalyses the reaction L-glutaminyl-[protein] + H2O = L-glutamyl-[protein] + NH4(+). Acyltransferase activity is regulated by the binding of GTP and Ca(2+): inactivated by GTP, which stabilizes its closed structure, thereby obstructing the accessibility of substrates to the active sites. In contrast, Ca(2+) acts as a cofactor by inducing conformational change to the active open form. In absence of Ca(2+), Mg(2+) may bind Ca(2+)-binding sites, promoting GTP-binding and subsequent inhibition of the acyltransferase activity. In terms of biological role, calcium-dependent acyltransferase that catalyzes the formation of covalent bonds between peptide-bound glutamine and various primary amines, such as gamma-amino group of peptide-bound lysine, or mono- and polyamines, thereby producing cross-linked or aminated proteins, respectively. Involved in many biological processes, such as bone development, angiogenesis, wound healing, cellular differentiation, chromatin modification and apoptosis. Acts as a protein-glutamine gamma-glutamyltransferase by mediating the cross-linking of proteins: under physiological conditions, the protein cross-linking activity is inhibited by GTP; inhibition is relieved by Ca(2+) in response to various stresses. When secreted, catalyzes cross-linking of proteins of the extracellular matrix, resulting in the formation of scaffolds. Plays a key role during apoptosis, both by (1) promoting the cross-linking of cytoskeletal proteins resulting in condensation of the cytoplasm, and by (2) mediating cross-linking proteins of the extracellular matrix, resulting in the irreversible formation of scaffolds that stabilize the integrity of the dying cells before their clearance by phagocytosis, thereby preventing the leakage of harmful intracellular components. In addition to protein cross-linking, can use different monoamine substrates to catalyze a vast array of protein post-translational modifications: mediates aminylation of serotonin, dopamine, noradrenaline or histamine into glutamine residues of target proteins to generate protein serotonylation, dopaminylation, noradrenalinylation or histaminylation, respectively. Mediates protein serotonylation of small GTPases during activation and aggregation of platelets, leading to constitutive activation of these GTPases. Plays a key role in chromatin organization by mediating serotonylation and dopaminylation of histone H3. Catalyzes serotonylation of 'Gln-5' of histone H3 (H3Q5ser) during serotonergic neuron differentiation, thereby facilitating transcription. Acts as a mediator of neurotransmission-independent role of nuclear dopamine in ventral tegmental area (VTA) neurons: catalyzes dopaminylation of 'Gln-5' of histone H3 (H3Q5dop), thereby regulating relapse-related transcriptional plasticity in the reward system. Also acts as a protein deamidase by mediating the side chain deamidation of specific glutamine residues of proteins to glutamate. May also act as an isopeptidase cleaving the previously formed cross-links. Also able to participate in signaling pathways independently of its acyltransferase activity: acts as a signal transducer in alpha-1 adrenergic receptor-mediated stimulation of phospholipase C-delta (PLCD) activity and is required for coupling alpha-1 adrenergic agonists to the stimulation of phosphoinositide lipid metabolism. The chain is Protein-glutamine gamma-glutamyltransferase 2 from Pagrus major (Red sea bream).